Consider the following 530-residue polypeptide: Autoinducer-2 kinase (530 aa).

Belongs to the FGGY kinase family.

The protein resides in the cytoplasm. The enzyme catalyses (S)-4,5-dihydroxypentane-2,3-dione + ATP = (2S)-2-hydroxy-3,4-dioxopentyl phosphate + ADP + H(+). Functionally, catalyzes the phosphorylation of autoinducer-2 (AI-2) to phospho-AI-2, which subsequently inactivates the transcriptional regulator LsrR and leads to the transcription of the lsr operon. Phosphorylates the ring-open form of (S)-4,5-dihydroxypentane-2,3-dione (DPD), which is the precursor to all AI-2 signaling molecules, at the C5 position. The sequence is that of Autoinducer-2 kinase from Yersinia pseudotuberculosis serotype O:1b (strain IP 31758).